Reading from the N-terminus, the 310-residue chain is Ribosomal protein uL3 glutamine methyltransferase (310 aa).

It belongs to the protein N5-glutamine methyltransferase family. PrmB subfamily.

The enzyme catalyses L-glutaminyl-[ribosomal protein uL3] + S-adenosyl-L-methionine = N(5)-methyl-L-glutaminyl-[ribosomal protein uL3] + S-adenosyl-L-homocysteine + H(+). In terms of biological role, specifically methylates large ribosomal subunit protein uL3 on 'Gln-150'. The protein is Ribosomal protein uL3 glutamine methyltransferase of Shigella dysenteriae serotype 1 (strain Sd197).